Here is an 880-residue protein sequence, read N- to C-terminus: Alanine--tRNA ligase (880 aa).

4 residues coordinate Zn(2+): histidine 566, histidine 570, cysteine 668, and histidine 672.

The protein belongs to the class-II aminoacyl-tRNA synthetase family. The cofactor is Zn(2+).

It is found in the cytoplasm. The enzyme catalyses tRNA(Ala) + L-alanine + ATP = L-alanyl-tRNA(Ala) + AMP + diphosphate. In terms of biological role, catalyzes the attachment of alanine to tRNA(Ala) in a two-step reaction: alanine is first activated by ATP to form Ala-AMP and then transferred to the acceptor end of tRNA(Ala). Also edits incorrectly charged Ser-tRNA(Ala) and Gly-tRNA(Ala) via its editing domain. The chain is Alanine--tRNA ligase from Nostoc sp. (strain PCC 7120 / SAG 25.82 / UTEX 2576).